We begin with the raw amino-acid sequence, 89 residues long: UPF0237 protein Cgl1544/cg1742 (89 aa).

Residues 4–82 form the ACT domain; it reads IMTVTGQDHT…LVIRIQSEAL (79 aa).

It belongs to the UPF0237 family.

This Corynebacterium glutamicum (strain ATCC 13032 / DSM 20300 / JCM 1318 / BCRC 11384 / CCUG 27702 / LMG 3730 / NBRC 12168 / NCIMB 10025 / NRRL B-2784 / 534) protein is UPF0237 protein Cgl1544/cg1742.